The primary structure comprises 297 residues: Lipoprotein NlpD/LppB homolog (297 aa).

The N-terminal stretch at 1–22 (MDKGEGLRLAATLRQWTRLYGG) is a signal peptide. A lipid anchor (N-palmitoyl cysteine) is attached at cysteine 23. Residue cysteine 23 is the site of S-diacylglycerol cysteine attachment. The LysM domain occupies 67–111 (GQYIVRRGDTLYSIAFRFGWDWKALAARNGIAPPYTIQVGQAIQF). The disordered stretch occupies residues 134–168 (TKPTPVPPAVSTSVPAKPAPAPASTTTPPSSGATP).

This sequence belongs to the E.coli NlpD/Haemophilus LppB family.

It is found in the cell inner membrane. The chain is Lipoprotein NlpD/LppB homolog from Pseudomonas aeruginosa (strain ATCC 15692 / DSM 22644 / CIP 104116 / JCM 14847 / LMG 12228 / 1C / PRS 101 / PAO1).